We begin with the raw amino-acid sequence, 1187 residues long: MNTVVREVGRRERKFFGKVPEKTEIYEDLVKIQKDSFRDFLDKKIMESIKRYMPIKIPVKASGKKNKEFLIDFVDVKFEDSSFSENECRDKGLTYAGKAYLKVRITDSATGEMIEKDDIFLCNIPYMTERGIFIVNGAERVIVNQLVRSPGVYFIKEEETDTSKEMFIAHFLPIKGAWLEILYNPNPGKEVLQVRIDRKRKFNFFLFLRALGYENDLDILRLFPKEIDLDDEVELSNYNNCTVLSDLSFQELDDMDPPRKSTYGMKLYEVLELLKKYEIKSVTVAHLVAEITLEKMKKRYEKEERLTSLEAYKEIFSKLKPTEIPRAQKAKEEIEDMYFNPEKFDFSQIGRQKIQVKLRKAYIDYLREVEKKDISEDMEDKIKYPIKTFAVDKLDIILSARYLLHVKENIEGLDTRDHLGNKRVRSVGELMQIEFERAFSKMIQHAPEKLAGVQSINKISPQSLINSRSIMTAFHQFFASSQLSQFLDQVNPLAELTHKRRLSAIGPGGLKREHAKFEVRDVHHSHYGRMCPIETPEGANIGLITSMAILAKVDEYGFLKTPYYRVKHAKVDLNNIVYLSADEEELYRIAPASAEIGEDGSLVEEYIEARYLGKVSLFHKDEIEYISVTPKQIASVSAALIPFLEHDDANRALMGSNMQRQAVPLLRPQAPFVGTGVEWLAARDSGYLIMAKHKGIVDYVDGRKIVITRLDEENNVLKDSNDEPLKDEYTLLKYVRSNQDMCINQVPIVNVGDVVTKGQAIADGPSMDMGELALGRNIFIGFLPWEGYNFEDAIVVSQELLENDAFTSIHIEVFETKAMDTQLGPEEITADIPNVKKELLRNLDEEGIVKIGSYVSSGDILVGKVTPRGESDTTPEEKLIKSVFGDKGRDIKDSSLTVPHGIEGRVIDVQIFDRKDIPSLEIGVNKYVKVFIATKKTLQVGDKLAGRHGNKGVISTILNKEDMPFLPDGTPLQMLLSPLGVPSRMNIGQVLELHLGWLSMLTNDYYATPIFDGATESEIMDELSKVREEHELYLGDDPDQPNGKIVLRDGRTGEPFDFPVAVGSMYMLKLSHIAKDKIHARSTGPYSLIHQQPLGGKAHFGGQRFGEMEVWALEAHGAAHTLNEMLTYKSDDIKGRNEVYKAILKGENLPEPGIPESFKVLTKELQGLMLDIKLYDEDGNELDVDRL.

It belongs to the RNA polymerase beta chain family. In terms of assembly, the RNAP catalytic core consists of 2 alpha, 1 beta, 1 beta' and 1 omega subunit. When a sigma factor is associated with the core the holoenzyme is formed, which can initiate transcription.

The catalysed reaction is RNA(n) + a ribonucleoside 5'-triphosphate = RNA(n+1) + diphosphate. Functionally, DNA-dependent RNA polymerase catalyzes the transcription of DNA into RNA using the four ribonucleoside triphosphates as substrates. This chain is DNA-directed RNA polymerase subunit beta, found in Petrotoga mobilis (strain DSM 10674 / SJ95).